A 408-amino-acid polypeptide reads, in one-letter code: Arginine deiminase (408 aa).

Cys397 serves as the catalytic Amidino-cysteine intermediate.

Belongs to the arginine deiminase family.

The protein localises to the cytoplasm. It catalyses the reaction L-arginine + H2O = L-citrulline + NH4(+). Its pathway is amino-acid degradation; L-arginine degradation via ADI pathway; carbamoyl phosphate from L-arginine: step 1/2. In Listeria innocua serovar 6a (strain ATCC BAA-680 / CLIP 11262), this protein is Arginine deiminase.